Consider the following 363-residue polypeptide: Dihydroorotate dehydrogenase (quinone) (363 aa).

Residues 67-71 and threonine 91 each bind FMN; that span reads AGFDK. Substrate is bound at residue lysine 71. 116–120 lines the substrate pocket; sequence NRMGF. Asparagine 156 and asparagine 189 together coordinate FMN. Substrate is bound at residue asparagine 189. Residue serine 192 is the Nucleophile of the active site. Asparagine 194 contacts substrate. Lysine 231 and threonine 259 together coordinate FMN. 260-261 contributes to the substrate binding site; it reads NT. FMN contacts are provided by residues glycine 287, glycine 316, and 337 to 338; that span reads YT.

Belongs to the dihydroorotate dehydrogenase family. Type 2 subfamily. Monomer. FMN is required as a cofactor.

Its subcellular location is the cell membrane. The enzyme catalyses (S)-dihydroorotate + a quinone = orotate + a quinol. It functions in the pathway pyrimidine metabolism; UMP biosynthesis via de novo pathway; orotate from (S)-dihydroorotate (quinone route): step 1/1. Functionally, catalyzes the conversion of dihydroorotate to orotate with quinone as electron acceptor. The polypeptide is Dihydroorotate dehydrogenase (quinone) (Kocuria rhizophila (strain ATCC 9341 / DSM 348 / NBRC 103217 / DC2201)).